A 501-amino-acid polypeptide reads, in one-letter code: Cytochrome P450 71B23 (501 aa).

Residues 1 to 21 (MSIFLCFLLLLLLLLVTIIFT) form a helical membrane-spanning segment. Position 443 (C443) interacts with heme.

Belongs to the cytochrome P450 family. The cofactor is heme.

It localises to the membrane. This chain is Cytochrome P450 71B23 (CYP71B23), found in Arabidopsis thaliana (Mouse-ear cress).